The following is a 96-amino-acid chain: Large ribosomal subunit protein uL23 (96 aa).

Belongs to the universal ribosomal protein uL23 family. As to quaternary structure, part of the 50S ribosomal subunit. Contacts protein L29, and trigger factor when it is bound to the ribosome.

One of the early assembly proteins it binds 23S rRNA. One of the proteins that surrounds the polypeptide exit tunnel on the outside of the ribosome. Forms the main docking site for trigger factor binding to the ribosome. In Endomicrobium trichonymphae, this protein is Large ribosomal subunit protein uL23.